The sequence spans 308 residues: Cell division protein FtsQ (308 aa).

At 1–53 (MDSGGRIVYALNVEKTGFLRILSVTVLQRLYRRVFWFLFKCVAGIDVPRHAGS) the chain is on the cytoplasmic side. A helical transmembrane segment spans residues 54-74 (LAVFSFFFLSILYSISSGGYM). The Periplasmic segment spans residues 75 to 308 (NHFMKVAISN…LLKMLKAGSV (234 aa)). One can recognise a POTRA domain in the interval 87-155 (FLVTHVDMSG…DRLRISLVER (69 aa)).

It belongs to the FtsQ/DivIB family. FtsQ subfamily.

The protein localises to the cell inner membrane. Its function is as follows. Essential cell division protein. The chain is Cell division protein FtsQ from Bartonella bacilliformis.